The following is a 797-amino-acid chain: Protocadherin beta-9 (797 aa).

An N-terminal signal peptide occupies residues 1-26 (MKTRGFSFPRQRQVLFLFLFWGVSLA). Topologically, residues 27–690 (GSGFGRYSVT…AQADSLTVYL (664 aa)) are extracellular. 5 consecutive Cadherin domains span residues 35–133 (VTEE…SPVF), 138–242 (MVLK…APQF), 247–347 (YETQ…PPEL), 352–451 (LSNS…APAF), and 456–561 (YTLF…SPFV). N169 carries N-linked (GlcNAc...) asparagine glycosylation. N418 carries an N-linked (GlcNAc...) asparagine glycan. Residue N567 is glycosylated (N-linked (GlcNAc...) asparagine). Residues 568–671 (GSAPCTELVP…LVDGFSQPYL (104 aa)) form the Cadherin 6 domain. A helical transmembrane segment spans residues 691–711 (VVALASVSSLFLLSVLLFVAV). Residues 712–797 (RLCRRSRAAS…TLHNSFGFNY (86 aa)) lie on the Cytoplasmic side of the membrane.

It localises to the cell membrane. In terms of biological role, potential calcium-dependent cell-adhesion protein. May be involved in the establishment and maintenance of specific neuronal connections in the brain. The chain is Protocadherin beta-9 (PCDHB9) from Pan troglodytes (Chimpanzee).